A 201-amino-acid chain; its full sequence is Probable molybdenum cofactor guanylyltransferase (201 aa).

Residues 6-8 (LAG), K18, D65, and D97 contribute to the GTP site. D97 is a binding site for Mg(2+).

It belongs to the MobA family. The cofactor is Mg(2+).

Its subcellular location is the cytoplasm. It catalyses the reaction Mo-molybdopterin + GTP + H(+) = Mo-molybdopterin guanine dinucleotide + diphosphate. Functionally, transfers a GMP moiety from GTP to Mo-molybdopterin (Mo-MPT) cofactor (Moco or molybdenum cofactor) to form Mo-molybdopterin guanine dinucleotide (Mo-MGD) cofactor. This is Probable molybdenum cofactor guanylyltransferase from Staphylococcus epidermidis (strain ATCC 35984 / DSM 28319 / BCRC 17069 / CCUG 31568 / BM 3577 / RP62A).